Reading from the N-terminus, the 328-residue chain is RNA-binding motif protein, X-linked 2 (328 aa).

K8 participates in a covalent cross-link: Glycyl lysine isopeptide (Lys-Gly) (interchain with G-Cter in SUMO2). The region spanning 36–114 is the RRM domain; sequence AWIFLGGLPY…RTIRVDHVAN (79 aa). The tract at residues 118 to 328 is disordered; it reads PQESEDVDDV…SFHASDRRHY (211 aa). A Phosphothreonine modification is found at T140. S149 is modified (phosphoserine). The span at 157 to 172 shows a compositional bias: basic residues; the sequence is TKKPKKDKKEKKKKKE. Basic and acidic residues-rich tracts occupy residues 192–219, 236–247, and 255–273; these read TVKE…ECRE, GRAEEPEWEAKK, and KPSS…DRGR. K246 is covalently cross-linked (Glycyl lysine isopeptide (Lys-Gly) (interchain with G-Cter in SUMO2)). S274 is subject to Phosphoserine. The segment covering 291-314 has biased composition (basic residues); sequence HRSRSRSRSRSPDRSHRHKKHRYS. Residues 315-328 show a composition bias toward basic and acidic residues; sequence HERESFHASDRRHY.

This sequence belongs to the IST3 family. Part of the activated spliceosome B/catalytic step 1 spliceosome, one of the forms of the spliceosome which has a well-formed active site but still cannot catalyze the branching reaction and is composed of at least 52 proteins, the U2, U5 and U6 snRNAs and the pre-mRNA. Component of the minor spliceosome, which splices U12-type introns.

It localises to the nucleus. Involved in pre-mRNA splicing as component of the activated spliceosome. As a component of the minor spliceosome, involved in the splicing of U12-type introns in pre-mRNAs. This chain is RNA-binding motif protein, X-linked 2 (Rbmx2), found in Rattus norvegicus (Rat).